Here is a 320-residue protein sequence, read N- to C-terminus: o-succinylbenzoate synthase (320 aa).

The Proton donor role is filled by Lys-133. Positions 161, 190, and 213 each coordinate Mg(2+). Lys-235 serves as the catalytic Proton acceptor.

This sequence belongs to the mandelate racemase/muconate lactonizing enzyme family. MenC type 1 subfamily. A divalent metal cation is required as a cofactor.

The enzyme catalyses (1R,6R)-6-hydroxy-2-succinyl-cyclohexa-2,4-diene-1-carboxylate = 2-succinylbenzoate + H2O. The protein operates within quinol/quinone metabolism; 1,4-dihydroxy-2-naphthoate biosynthesis; 1,4-dihydroxy-2-naphthoate from chorismate: step 4/7. It functions in the pathway quinol/quinone metabolism; menaquinone biosynthesis. Its function is as follows. Converts 2-succinyl-6-hydroxy-2,4-cyclohexadiene-1-carboxylate (SHCHC) to 2-succinylbenzoate (OSB). The sequence is that of o-succinylbenzoate synthase from Escherichia fergusonii (strain ATCC 35469 / DSM 13698 / CCUG 18766 / IAM 14443 / JCM 21226 / LMG 7866 / NBRC 102419 / NCTC 12128 / CDC 0568-73).